Reading from the N-terminus, the 264-residue chain is tRNA1(Val) (adenine(37)-N6)-methyltransferase (264 aa).

Belongs to the methyltransferase superfamily. tRNA (adenine-N(6)-)-methyltransferase family.

The protein localises to the cytoplasm. The enzyme catalyses adenosine(37) in tRNA1(Val) + S-adenosyl-L-methionine = N(6)-methyladenosine(37) in tRNA1(Val) + S-adenosyl-L-homocysteine + H(+). Functionally, specifically methylates the adenine in position 37 of tRNA(1)(Val) (anticodon cmo5UAC). The chain is tRNA1(Val) (adenine(37)-N6)-methyltransferase from Shewanella pealeana (strain ATCC 700345 / ANG-SQ1).